We begin with the raw amino-acid sequence, 318 residues long: Taste receptor type 2 member 7 (318 aa).

The Extracellular portion of the chain corresponds to methionine 1–leucine 9. The chain crosses the membrane as a helical span at residues leucine 10–valine 30. At asparagine 31–arginine 55 the chain is on the cytoplasmic side. The helical transmembrane segment at isoleucine 56–tyrosine 76 threads the bilayer. Over alanine 77–histidine 94 the chain is Extracellular. The chain crosses the membrane as a helical span at residues leucine 95–phenylalanine 115. Topologically, residues histidine 116 to arginine 128 are cytoplasmic. A helical transmembrane segment spans residues valine 129 to threonine 149. At glutamate 150–asparagine 187 the chain is on the extracellular side. Asparagine 167 and asparagine 175 each carry an N-linked (GlcNAc...) asparagine glycan. Residues leucine 188–leucine 208 traverse the membrane as a helical segment. Topologically, residues arginine 209–lysine 235 are cytoplasmic. Residues alanine 236–serine 256 form a helical membrane-spanning segment. The Extracellular portion of the chain corresponds to serine 257–alanine 266. A helical transmembrane segment spans residues valine 267–leucine 287. Residues glycine 288–isoleucine 318 lie on the Cytoplasmic side of the membrane.

This sequence belongs to the G-protein coupled receptor T2R family.

The protein localises to the membrane. Its function is as follows. Gustducin-coupled receptor implicated in the perception of bitter compounds in the oral cavity and the gastrointestinal tract. Signals through PLCB2 and the calcium-regulated cation channel TRPM5. This is Taste receptor type 2 member 7 (TAS2R7) from Gorilla gorilla gorilla (Western lowland gorilla).